The primary structure comprises 515 residues: Probable cytochrome P450 6d4 (515 aa).

Residue C457 participates in heme binding.

Belongs to the cytochrome P450 family. Heme is required as a cofactor.

The protein resides in the endoplasmic reticulum membrane. Its subcellular location is the microsome membrane. Its function is as follows. May be involved in the metabolism of insect hormones and in the breakdown of synthetic insecticides. This is Probable cytochrome P450 6d4 (Cyp6d4) from Drosophila melanogaster (Fruit fly).